A 358-amino-acid polypeptide reads, in one-letter code: C-X-C chemokine receptor type 4-B (358 aa).

The interval M1–F25 is important for chemokine binding and signaling. Residues M1–F44 lie on the Extracellular side of the membrane. N-linked (GlcNAc...) asparagine glycans are attached at residues N16 and N20. 2 cysteine pairs are disulfide-bonded: C32/C281 and C113/C190. Residues L45–M67 form a helical membrane-spanning segment. The Cytoplasmic portion of the chain corresponds to G68–R81. The chain crosses the membrane as a helical span at residues L82–A103. The segment at W98–D101 is chemokine binding. At I104–K114 the chain is on the extracellular side. The chain crosses the membrane as a helical span at residues A115–I134. The interval H117–T121 is chemokine binding. Residues S135 to K158 are Cytoplasmic-facing. The interval Y139–S151 is involved in dimerization; when bound to chemokine. A helical membrane pass occupies residues V159–F178. Topologically, residues A179–W202 are extracellular. The tract at residues C190–Y194 is chemokine binding, important for signaling. Residues T203–L223 traverse the membrane as a helical segment. Over V224–T248 the chain is Cytoplasmic. The helical transmembrane segment at V249 to T268 threads the bilayer. At D269–K289 the chain is on the extracellular side. Residues A290–Y309 form a helical membrane-spanning segment. The Cytoplasmic portion of the chain corresponds to A310 to S358. Residues K338–S358 are disordered. Over residues S344 to S358 the composition is skewed to low complexity.

It belongs to the G-protein coupled receptor 1 family. As to quaternary structure, monomer. Can form dimers. In terms of processing, sulfation is required for efficient binding of cxcl12/sdf-1alpha and promotes its dimerization. O- and N-glycosylated.

The protein resides in the cell membrane. Its subcellular location is the cytoplasm. The protein localises to the nucleus. It is found in the early endosome. It localises to the late endosome. The protein resides in the lysosome. Its function is as follows. Receptor for the C-X-C chemokine cxcl12/sdf-1. Transduces a signal by increasing the intracellular level of calcium ions. Signaling with cxcl12/sdf-1 mediates the directional movement of mesodermal cells during gastrulation. May play a role in the migration of embryonic presumptive primordial germ cells (pPGCs). May also be involved in regulating migration of hematopoietic stem cells into the larval liver. In Xenopus laevis (African clawed frog), this protein is C-X-C chemokine receptor type 4-B (cxcr4-b).